We begin with the raw amino-acid sequence, 349 residues long: tRNA N6-adenosine threonylcarbamoyltransferase (349 aa).

The Fe cation site is built by His-117 and His-121. Residues 139–143 (QVSGG), Asp-172, Gly-185, Asp-189, and Asn-278 contribute to the substrate site. Residue Asp-310 coordinates Fe cation.

This sequence belongs to the KAE1 / TsaD family. It depends on Fe(2+) as a cofactor.

It localises to the cytoplasm. The catalysed reaction is L-threonylcarbamoyladenylate + adenosine(37) in tRNA = N(6)-L-threonylcarbamoyladenosine(37) in tRNA + AMP + H(+). Required for the formation of a threonylcarbamoyl group on adenosine at position 37 (t(6)A37) in tRNAs that read codons beginning with adenine. Is involved in the transfer of the threonylcarbamoyl moiety of threonylcarbamoyl-AMP (TC-AMP) to the N6 group of A37, together with TsaE and TsaB. TsaD likely plays a direct catalytic role in this reaction. This Lactobacillus acidophilus (strain ATCC 700396 / NCK56 / N2 / NCFM) protein is tRNA N6-adenosine threonylcarbamoyltransferase.